The sequence spans 280 residues: Cytochrome c1 (280 aa).

An N-terminal signal peptide occupies residues 1–21 (MKKLLISAVSALVLGSGAALA). Heme c is bound by residues Cys55, Cys58, His59, and Met205. Residues 249-267 (MGLVAVVMLGLLSVMLYLT) form a helical membrane-spanning segment.

As to quaternary structure, the main subunits of complex b-c1 are: cytochrome b, cytochrome c1 and the Rieske protein. Binds 1 heme c group covalently per subunit.

It is found in the cell membrane. Component of the ubiquinol-cytochrome c reductase complex (complex III or cytochrome b-c1 complex), which is a respiratory chain that generates an electrochemical potential coupled to ATP synthesis. c1 functions as an electron donor to cytochrome c. The chain is Cytochrome c1 (petC) from Rhodobacter capsulatus (Rhodopseudomonas capsulata).